A 322-amino-acid polypeptide reads, in one-letter code: RNA pseudouridine synthase 1 (322 aa).

Asp-120 is a catalytic residue.

It belongs to the pseudouridine synthase RluA family.

The enzyme catalyses a uridine in RNA = a pseudouridine in RNA. The protein is RNA pseudouridine synthase 1 of Arabidopsis thaliana (Mouse-ear cress).